A 1576-amino-acid chain; its full sequence is Disco-interacting protein 2 homolog B (1576 aa).

Phosphoserine is present on residues S9, S50, and S53. The region spanning 12–131 is the DMAP1-binding domain; sequence AVAALPPEVR…PMPTKRRSTF (120 aa). Positions 31 to 167 are disordered; sequence LSEGDITQKG…AALSAALQQS (137 aa). Positions 52–62 are enriched in polar residues; sequence YSPQTQETDSA. The segment covering 70 to 83 has biased composition (low complexity); it reads QTPAPSAAQTSAPS. The residue at position 71 (T71) is a Phosphothreonine. A compositionally biased stretch (basic and acidic residues) spans 92–104; it reads GARDERYRSDIHT. A Phosphoserine modification is found at S100. T140 bears the Phosphothreonine mark. A phosphoserine mark is found at S146, S148, and S153. Low complexity predominate over residues 155 to 167; sequence RRQAALSAALQQS. 3 positions are modified to phosphoserine: S178, S193, and S203. Residues 179–201 form a disordered region; sequence IQGSSTSSSASSTLSHGEVKGTS. Residues 182–193 show a composition bias toward low complexity; it reads SSTSSSASSTLS. A disordered region spans residues 217–246; the sequence is SAPPDVTTTTSSSSSSSSIRPANIDLPPSG. Positions 223–234 are enriched in low complexity; the sequence is TTTTSSSSSSSS. S259 carries the phosphoserine modification.

This sequence belongs to the DIP2 family. As to quaternary structure, interacts with alpha-tubulin. Moderately expressed in adult brain, placenta, skeletal muscle, heart, kidney, pancreas, lung, spleen and colon. Expression was weaker in adult liver, kidney, spleen, and ovary, and in fetal brain and liver. In the brain, it is expressed in the cerebral cortex; the frontal, parietal, occipital and temporal lobes; the paracentral gyrus; the pons; the corpus callosum and the hippocampus. Highest expression levels in the brain were found in the cerebral cortex and the frontal and parietal lobes.

It is found in the cell projection. It localises to the dendrite. Its subcellular location is the axon. The protein resides in the perikaryon. In terms of biological role, negatively regulates axonal outgrowth and is essential for normal synaptic transmission. Not required for regulation of axon polarity. Promotes acetylation of alpha-tubulin. The sequence is that of Disco-interacting protein 2 homolog B (DIP2B) from Homo sapiens (Human).